Here is a 287-residue protein sequence, read N- to C-terminus: Beta-lactamase GES-1 (287 aa).

The N-terminal stretch at 1–18 (MRFIHALLLAGIAHSAYA) is a signal peptide. Cysteines 63 and 233 form a disulfide. S64 acts as the Nucleophile; acyl-ester intermediate in catalysis. Residues K67, S125, E161, and T232 each coordinate a beta-lactam.

Belongs to the class-A beta-lactamase family. As to quaternary structure, monomer. May form dimers.

It carries out the reaction a beta-lactam + H2O = a substituted beta-amino acid. Inhibited by the beta-lactamase-blocking agents clavulanic acid, tazobactam, sulbactam and tazobactam and the carbapenem, imipenem. Inhibition by imipenem may involve Gly-165. Its function is as follows. Extended-spectrum beta-lactamase (ESBL) which confers resistance to penicillins, as well as first, second, third and fourth-generation cephalosporins. Has ceftazidime-hydrolyzing activity. Inactive against the carbapenems, imipenem, meropenem, ertapenem and doripenem. However, weak hydrolytic activity with respect to imipenem has also been reported. The polypeptide is Beta-lactamase GES-1 (Klebsiella pneumoniae).